The primary structure comprises 387 residues: Succinate--CoA ligase [ADP-forming] subunit beta (387 aa).

Residues 9–236 enclose the ATP-grasp domain; sequence KELFAKHNVP…RAATDPLELK (228 aa). Residues K45, 52–54, S94, and E99 each bind ATP; that span reads GRG. Positions 191 and 205 each coordinate Mg(2+). Substrate is bound by residues N256 and 318–320; that span reads GIT.

Belongs to the succinate/malate CoA ligase beta subunit family. As to quaternary structure, heterotetramer of two alpha and two beta subunits. Requires Mg(2+) as cofactor.

It catalyses the reaction succinate + ATP + CoA = succinyl-CoA + ADP + phosphate. It carries out the reaction GTP + succinate + CoA = succinyl-CoA + GDP + phosphate. Its pathway is carbohydrate metabolism; tricarboxylic acid cycle; succinate from succinyl-CoA (ligase route): step 1/1. Functionally, succinyl-CoA synthetase functions in the citric acid cycle (TCA), coupling the hydrolysis of succinyl-CoA to the synthesis of either ATP or GTP and thus represents the only step of substrate-level phosphorylation in the TCA. The beta subunit provides nucleotide specificity of the enzyme and binds the substrate succinate, while the binding sites for coenzyme A and phosphate are found in the alpha subunit. The chain is Succinate--CoA ligase [ADP-forming] subunit beta from Mycobacterium bovis (strain ATCC BAA-935 / AF2122/97).